The chain runs to 1408 residues: DNA-directed RNA polymerase subunit beta' (1408 aa).

The Zn(2+) site is built by Cys-70, Cys-72, Cys-85, and Cys-88. Mg(2+)-binding residues include Asp-460, Asp-462, and Asp-464. Zn(2+) contacts are provided by Cys-814, Cys-888, Cys-895, and Cys-898.

The protein belongs to the RNA polymerase beta' chain family. The RNAP catalytic core consists of 2 alpha, 1 beta, 1 beta' and 1 omega subunit. When a sigma factor is associated with the core the holoenzyme is formed, which can initiate transcription. It depends on Mg(2+) as a cofactor. Requires Zn(2+) as cofactor.

The enzyme catalyses RNA(n) + a ribonucleoside 5'-triphosphate = RNA(n+1) + diphosphate. Its function is as follows. DNA-dependent RNA polymerase catalyzes the transcription of DNA into RNA using the four ribonucleoside triphosphates as substrates. In Serratia proteamaculans (strain 568), this protein is DNA-directed RNA polymerase subunit beta'.